The primary structure comprises 953 residues: Translation initiation factor IF-2 (953 aa).

2 disordered regions span residues 48-248 and 279-363; these read SSFS…AELA and TKLK…TERK. Basic and acidic residues-rich tracts occupy residues 80 to 89, 98 to 111, and 140 to 188; these read TGSEHAEKTQ, FKAEREARAKEQAA, and QGDK…ENHK. The span at 191–207 shows a compositional bias: polar residues; sequence RFTNQKKQGRQEPQSKS. The segment covering 229–248 has biased composition (basic and acidic residues); it reads RQSETRFRAQQEAKRLAELA. Residues 282 to 291 show a composition bias toward polar residues; that stretch reads KSSNISAKST. The span at 300–317 shows a compositional bias: basic and acidic residues; sequence ARPEKNRELTHHSQEGQK. Residues 322-338 are compositionally biased toward low complexity; that stretch reads SWNSQNQVRNQKNSNWN. The span at 339-348 shows a compositional bias: basic residues; that stretch reads KNKKTKKGKN. A tr-type G domain is found at 454–623; that stretch reads ERAPVVTIMG…LLVAEVEELK (170 aa). The G1 stretch occupies residues 463–470; the sequence is GHVDHGKT. 463–470 contacts GTP; the sequence is GHVDHGKT. The segment at 488–492 is G2; sequence GITQH. Residues 509–512 form a G3 region; it reads DTPG. GTP contacts are provided by residues 509–513 and 563–566; these read DTPGH and NKID. The interval 563-566 is G4; it reads NKID. Residues 599 to 601 form a G5 region; it reads SAK.

Belongs to the TRAFAC class translation factor GTPase superfamily. Classic translation factor GTPase family. IF-2 subfamily.

It is found in the cytoplasm. Its function is as follows. One of the essential components for the initiation of protein synthesis. Protects formylmethionyl-tRNA from spontaneous hydrolysis and promotes its binding to the 30S ribosomal subunits. Also involved in the hydrolysis of GTP during the formation of the 70S ribosomal complex. The sequence is that of Translation initiation factor IF-2 from Streptococcus pyogenes serotype M18 (strain MGAS8232).